Consider the following 207-residue polypeptide: Outer-membrane lipoprotein carrier protein (207 aa).

An N-terminal signal peptide occupies residues 1–23 (MMKPHNLFQFLAVCSLTVAVASA).

It belongs to the LolA family. In terms of assembly, monomer.

It is found in the periplasm. Functionally, participates in the translocation of lipoproteins from the inner membrane to the outer membrane. Only forms a complex with a lipoprotein if the residue after the N-terminal Cys is not an aspartate (The Asp acts as a targeting signal to indicate that the lipoprotein should stay in the inner membrane). The sequence is that of Outer-membrane lipoprotein carrier protein from Neisseria gonorrhoeae (strain ATCC 700825 / FA 1090).